The following is a 207-amino-acid chain: Nuclear transcription factor Y subunit beta (207 aa).

Positions 1 to 52 (MTMDGDSSTTDASQLGISADYIGGSHYVIQPHDDTEDSMNDHEDTNGSKESF) are a domain. The tract at residues 27–52 (YVIQPHDDTEDSMNDHEDTNGSKESF) is disordered. The segment covering 39-52 (MNDHEDTNGSKESF) has biased composition (basic and acidic residues). Residues 53–142 (REQDIYLPIA…PLKLYLQKFR (90 aa)) form a b domain region. A DNA-binding region spans residues 59–65 (LPIANVA). Residues 86 to 97 (VQECVSEFISFI) form a subunit association domain (SAD) region. Lys-140 participates in a covalent cross-link: Glycyl lysine isopeptide (Lys-Gly) (interchain with G-Cter in ubiquitin). Residues 143-207 (EAMKGEKGIG…ISGVQQIQFS (65 aa)) are c domain.

Belongs to the NFYB/HAP3 subunit family. Heterotrimeric transcription factor composed of three components, NF-YA, NF-YB and NF-YC. NF-YB and NF-YC must interact and dimerize for NF-YA association and DNA binding. Interacts with C1QBP. Monoubiquitination at Lys-140 plays an important role in transcriptional activation by allowing the deposition of histone H3 methylations as well as histone H2B monoubiquitination at 'Lys-121'.

It localises to the nucleus. Its function is as follows. Component of the sequence-specific heterotrimeric transcription factor (NF-Y) which specifically recognizes a 5'-CCAAT-3' box motif found in the promoters of its target genes. NF-Y can function as both an activator and a repressor, depending on its interacting cofactors. This chain is Nuclear transcription factor Y subunit beta (Nfyb), found in Mus musculus (Mouse).